We begin with the raw amino-acid sequence, 467 residues long: Chromosomal replication initiator protein DnaA (467 aa).

The tract at residues 1 to 85 is domain I, interacts with DnaA modulators; the sequence is MTTTLWPQVL…LEVGEYAIES (85 aa). The interval 85-130 is domain II; sequence SFNEPENTSVPQPLRETKAEREAAEKAASSTSKKKSDSPPKKTIKH. The tract at residues 87–129 is disordered; it reads NEPENTSVPQPLRETKAEREAAEKAASSTSKKKSDSPPKKTIK. A compositionally biased stretch (basic and acidic residues) spans 99–109; that stretch reads RETKAEREAAE. The tract at residues 131–347 is domain III, AAA+ region; sequence NLNTNFTFDT…GALKRVGAFA (217 aa). Gly-175, Gly-177, Lys-178, and Thr-179 together coordinate ATP. The domain IV, binds dsDNA stretch occupies residues 348 to 467; the sequence is QFTQQLVTVD…FNSLIRIITN (120 aa).

The protein belongs to the DnaA family. Oligomerizes as a right-handed, spiral filament on DNA at oriC.

Its subcellular location is the cytoplasm. Plays an essential role in the initiation and regulation of chromosomal replication. ATP-DnaA binds to the origin of replication (oriC) to initiate formation of the DNA replication initiation complex once per cell cycle. Binds the DnaA box (a 9 base pair repeat at the origin) and separates the double-stranded (ds)DNA. Forms a right-handed helical filament on oriC DNA; dsDNA binds to the exterior of the filament while single-stranded (ss)DNA is stabiized in the filament's interior. The ATP-DnaA-oriC complex binds and stabilizes one strand of the AT-rich DNA unwinding element (DUE), permitting loading of DNA polymerase. After initiation quickly degrades to an ADP-DnaA complex that is not apt for DNA replication. Binds acidic phospholipids. The chain is Chromosomal replication initiator protein DnaA from Hydrogenovibrio crunogenus (strain DSM 25203 / XCL-2) (Thiomicrospira crunogena).